The sequence spans 239 residues: Leucine-rich repeat-containing protein 57 (239 aa).

G2 is lipidated: N-myristoyl glycine. 8 LRR repeats span residues 39 to 60, 63 to 85, 86 to 107, 109 to 130, 132 to 153, 154 to 175, 177 to 197, and 202 to 222; these read NLRT…IIGK, LLKS…CNLK, KLET…FGQL, ALKT…LCCL, HLDV…VGEL, QAIE…ISCC, RLKV…PQSI, and QICL…RELE.

Its subcellular location is the membrane. The sequence is that of Leucine-rich repeat-containing protein 57 (Lrrc57) from Mus musculus (Mouse).